Reading from the N-terminus, the 100-residue chain is Sweet protein mabinlin-4 (100 aa).

4 disulfides stabilise this stretch: cysteine 4–cysteine 49, cysteine 17–cysteine 38, cysteine 39–cysteine 87, and cysteine 51–cysteine 95.

It belongs to the 2S seed storage albumins family. Heterodimer of a small A and a large B chain linked by disulfide bonds.

Its function is as follows. Heat stable 2S seed storage protein having sweetness-inducing activity. The polypeptide is Sweet protein mabinlin-4 (Capparis masaikai (Mabinlang)).